Reading from the N-terminus, the 388-residue chain is 4-hydroxy-tetrahydrodipicolinate synthase 1, chloroplastic (388 aa).

A disordered region spans residues 1-51 (MPYLQPPRPHPHPHPTSRLSRASPPSPFPFFPAGTSRSGRLQPVPVSGHSA). The N-terminal 62 residues, 1-62 (MPYLQPPRPH…RVSKGKFAVA (62 aa)), are a transit peptide targeting the chloroplast. T131 is a pyruvate binding site. Y217 functions as the Proton donor/acceptor in the catalytic mechanism. K245 functions as the Schiff-base intermediate with substrate in the catalytic mechanism. Position 284 (I284) interacts with pyruvate.

It belongs to the DapA family. In terms of assembly, tetramer of modified subunits derived from two genes in different combinations.

The protein localises to the plastid. It localises to the chloroplast. The catalysed reaction is L-aspartate 4-semialdehyde + pyruvate = (2S,4S)-4-hydroxy-2,3,4,5-tetrahydrodipicolinate + H2O + H(+). It participates in amino-acid biosynthesis; L-lysine biosynthesis via DAP pathway; (S)-tetrahydrodipicolinate from L-aspartate: step 3/4. Its activity is regulated as follows. Sensitive to lysine inhibition. This inhibition increase in an allosteric manner with increasing concentration of the inhibitor. In terms of biological role, catalyzes the condensation of (S)-aspartate-beta-semialdehyde [(S)-ASA] and pyruvate to 4-hydroxy-tetrahydrodipicolinate (HTPA). The protein is 4-hydroxy-tetrahydrodipicolinate synthase 1, chloroplastic of Triticum aestivum (Wheat).